The primary structure comprises 547 residues: Chaperonin GroEL (547 aa).

ATP is bound by residues 30 to 33 (TLGP), lysine 51, 87 to 91 (DGTTT), glycine 415, and aspartate 496. The disordered stretch occupies residues 527–547 (SDKAEPMPMRGGMGGMGGMDF). Residues 537–547 (GGMGGMGGMDF) show a composition bias toward gly residues.

This sequence belongs to the chaperonin (HSP60) family. As to quaternary structure, forms a cylinder of 14 subunits composed of two heptameric rings stacked back-to-back. Interacts with the co-chaperonin GroES.

It localises to the cytoplasm. It carries out the reaction ATP + H2O + a folded polypeptide = ADP + phosphate + an unfolded polypeptide.. Together with its co-chaperonin GroES, plays an essential role in assisting protein folding. The GroEL-GroES system forms a nano-cage that allows encapsulation of the non-native substrate proteins and provides a physical environment optimized to promote and accelerate protein folding. This Rickettsia africae (strain ESF-5) protein is Chaperonin GroEL.